The sequence spans 421 residues: DVFFYQADDQHFIPRSLLIDLEPRVINGIQNSEYRNLYNHENIFVAEHGGGAGNNWASGYHQGEQFVDDIMDMVDREADGSDSLEGFVLCHSIAGGTGSGMGSYLLETLNDRYSKKLVQTYSVFPNQVETSDVVVQPYNSLLTLKRLTLNADCVVVLDNTALNRIAVERLHLSNPTFAQTNSLVSTVMSASTTTLRYPGYMNNDLVGLLASLIPTPRCHFLMTGYTPLTVERQVNMIRKTTVLDVMRRLLQTKNIMVSSYARTKEASQAKYISILNIIQGEVDPTQVHESLQRIRERKLVNFIDWAPASIQVALSRKSPYVQTTHRVSGLMLANHTSIRHLFSKCLGQYEKLRKKQAFLDNYRKFPMFADNDLSEFDESREIIESLVDEYKACESPDYIKWGMEDPGEANVVAALDSKLVV.

94–100 is a GTP binding site; that stretch reads AGGTGSG.

This sequence belongs to the tubulin family.

Its subcellular location is the cytoplasm. The protein localises to the cytoskeleton. It is found in the microtubule organizing center. Its function is as follows. Tubulin is the major constituent of microtubules. The gamma chain is found at microtubule organizing centers (MTOC) such as the spindle poles, suggesting that it is involved in the minus-end nucleation of microtubule assembly. This chain is Tubulin gamma-3 chain (TUBG3), found in Zea mays (Maize).